The sequence spans 49 residues: Large ribosomal subunit protein bL33C (49 aa).

This sequence belongs to the bacterial ribosomal protein bL33 family.

This chain is Large ribosomal subunit protein bL33C, found in Bacillus pumilus (strain SAFR-032).